The following is an 86-amino-acid chain: Small nuclear ribonucleoprotein F (86 aa).

The region spanning 14–86 (NPKPFLKGLV…NVLYIRELPN (73 aa)) is the Sm domain.

The protein belongs to the snRNP Sm proteins family. SmF/LSm6 subfamily. Component of the Sm core complex, present in spliceosomal snRNP U1, U2, U4/U6 and U5. The core complex contains SMB1, SMD1, SMD2, SMD3, SME1, SMX3 and SMX2 (Sm proteins B, D1, D2, D3, E, F and G, respectively), and is probably a heptameric ring structure. SMX3 specifically interacts with SME1. Belongs to the CWC complex (or CEF1-associated complex), a spliceosome sub-complex reminiscent of a late-stage spliceosome composed of the U2, U5 and U6 snRNAs and at least BUD13, BUD31, BRR2, CDC40, CEF1, CLF1, CUS1, CWC2, CWC15, CWC21, CWC22, CWC23, CWC24, CWC25, CWC27, ECM2, HSH155, IST3, ISY1, LEA1, MSL1, NTC20, PRP8, PRP9, PRP11, PRP19, PRP21, PRP22, PRP45, PRP46, SLU7, SMB1, SMD1, SMD2, SMD3, SMX2, SMX3, SNT309, SNU114, SPP2, SYF1, SYF2, RSE1 and YJU2. Component of the U4/U6-U5 tri-snRNP complex composed of the U4, U6 and U5 snRNAs and at least PRP3, PRP4, PRP6, PRP8, PRP18, PRP31, PRP38, SNU13, SNU23, SNU66, SNU114, SPP381, SMB1, SMD1, SMD2, SMD3, SMX2, SMX3, LSM2, LSM3, LSM4, LSM5, LSM6, LSM7, LSM8, BRR2 and DIB1.

The protein resides in the nucleus. Its subcellular location is the cytoplasm. Its function is as follows. Plays a role in pre-mRNA splicing as a core component of the spliceosomal U1, U2, U4 and U5 small nuclear ribonucleoproteins (snRNPs), the building blocks of the spliceosome. The chain is Small nuclear ribonucleoprotein F (SMX3) from Saccharomyces cerevisiae (strain ATCC 204508 / S288c) (Baker's yeast).